The sequence spans 512 residues: Kelch repeat protein C2 (512 aa).

A BTB domain is found at 2-67 (ESVIFSINGE…IRWKKINITI (66 aa)). Positions 102–176 (CIRMFNFSKR…LLKWIHKNPN (75 aa)) constitute a BACK domain. Kelch repeat units lie at residues 216 to 261 (IKHN…LHNC), 262 to 307 (LYII…VNDG), 309 to 354 (LYVI…FVND), 356 to 403 (IYVM…EYDG), 405 to 449 (IYVI…SCGD), and 452 to 498 (LIIA…THKS).

Belongs to the poxviruses Kelch family.

The polypeptide is Kelch repeat protein C2 (Vaccinia virus (strain Western Reserve) (VACV)).